A 226-amino-acid chain; its full sequence is ATP synthase subunit a 1 (226 aa).

A run of 5 helical transmembrane segments spans residues 20-40 (LTIVTTWAVMLLLAGGSWLIT), 78-98 (YLPFIATLFLFIATANLCTVI), 113-133 (ALALSVFIAVPLFGIAESGLV), 174-194 (MILVILLTISPLVFPVLMNIL), and 196-216 (LLTGMVQAYIFSILATVYIAA).

It belongs to the ATPase A chain family. In terms of assembly, F-type ATPases have 2 components, CF(1) - the catalytic core - and CF(0) - the membrane proton channel. CF(1) has five subunits: alpha(3), beta(3), gamma(1), delta(1), epsilon(1). CF(0) has four main subunits: a, b, b' and c.

It is found in the cell inner membrane. Its function is as follows. Key component of the proton channel; it plays a direct role in the translocation of protons across the membrane. This Chlorobaculum parvum (strain DSM 263 / NCIMB 8327) (Chlorobium vibrioforme subsp. thiosulfatophilum) protein is ATP synthase subunit a 1.